The following is a 259-amino-acid chain: Polycomb group RING finger protein 1 (259 aa).

Ala2 carries the N-acetylalanine modification. Ser3 is subject to Phosphoserine. Lys24 is covalently cross-linked (Glycyl lysine isopeptide (Lys-Gly) (interchain with G-Cter in SUMO2)). Residues 47–86 form an RING-type zinc finger; sequence CCLCAGYFVDATTITECLHTFCKSCIVKYLQTSKYCPMCN. The tract at residues 86–247 is required for repressor activity; sequence NIKIHETQPL…LSRWFGKPSP (162 aa). Lys88 is covalently cross-linked (Glycyl lysine isopeptide (Lys-Gly) (interchain with G-Cter in SUMO2)). Residues 150–255 are required for the interaction with the KDM2B-SKP1 heterodimeric complex; it reads LPFSSFDHSK…SPLLLQYSVK (106 aa). The RING-finger and WD40-associated ubiquitin-like domain (RAWUL); sufficient for interaction with BCOR and BCORL1 stretch occupies residues 167 to 255; it reads EQLNLCLERL…SPLLLQYSVK (89 aa).

In terms of assembly, interacts with BCORL1, forming heterodimers. The PCGF1-BCORL1 heterodimeric complex interacts with the KDM2B-SKP1 heterodimeric complex to form a homotetrameric polycomb repression complex 1 (PRC1.1). Component of the repressive BCOR complex containing a Polycomb group subcomplex at least composed of RYBP, RING1 and RNF2/RING2. Specifically interacts with BCOR, RING1 and RNF2/RING2. Component of a PRC1-like complex. Interacts with CBX6, CBX7 and CBX8. Interacts with DPPA4, NANOG, POU5F1 and RYBP. As to expression, ubiquitous.

It localises to the nucleus. Its function is as follows. Component of the Polycomb group (PcG) multiprotein BCOR complex, a complex required to maintain the transcriptionally repressive state of some genes, such as BCL6 and the cyclin-dependent kinase inhibitor, CDKN1A. Transcriptional repressor that may be targeted to the DNA by BCL6; this transcription repressor activity may be related to PKC signaling pathway. Represses CDKN1A expression by binding to its promoter, and this repression is dependent on the retinoic acid response element (RARE element). Promotes cell cycle progression and enhances cell proliferation as well. May have a positive role in tumor cell growth by down-regulating CDKN1A. Component of a Polycomb group (PcG) multiprotein PRC1-like complex, a complex class required to maintain the transcriptionally repressive state of many genes, including Hox genes, throughout development. PcG PRC1 complex acts via chromatin remodeling and modification of histones; it mediates monoubiquitination of histone H2A 'Lys-119', rendering chromatin heritably changed in its expressibility. Within the PRC1-like complex, regulates RNF2 ubiquitin ligase activity. Regulates the expression of DPPA4 and NANOG in the NT2 embryonic carcinoma cells. The polypeptide is Polycomb group RING finger protein 1 (PCGF1) (Homo sapiens (Human)).